Consider the following 138-residue polypeptide: Protein FAM136A (138 aa).

An N-acetylalanine modification is found at alanine 2. Residues threonine 124 and threonine 126 each carry the phosphothreonine modification.

This sequence belongs to the FAM136 family.

The sequence is that of Protein FAM136A (Fam136a) from Mus musculus (Mouse).